We begin with the raw amino-acid sequence, 366 residues long: tRNA/tmRNA (uracil-C(5))-methyltransferase (366 aa).

5 residues coordinate S-adenosyl-L-methionine: glutamine 189, tyrosine 217, asparagine 222, glutamate 238, and aspartate 298. The active-site Nucleophile is cysteine 323. The active-site Proton acceptor is the glutamate 357.

Belongs to the class I-like SAM-binding methyltransferase superfamily. RNA M5U methyltransferase family. TrmA subfamily.

The catalysed reaction is uridine(54) in tRNA + S-adenosyl-L-methionine = 5-methyluridine(54) in tRNA + S-adenosyl-L-homocysteine + H(+). It carries out the reaction uridine(341) in tmRNA + S-adenosyl-L-methionine = 5-methyluridine(341) in tmRNA + S-adenosyl-L-homocysteine + H(+). In terms of biological role, dual-specificity methyltransferase that catalyzes the formation of 5-methyluridine at position 54 (m5U54) in all tRNAs, and that of position 341 (m5U341) in tmRNA (transfer-mRNA). In Idiomarina loihiensis (strain ATCC BAA-735 / DSM 15497 / L2-TR), this protein is tRNA/tmRNA (uracil-C(5))-methyltransferase.